A 385-amino-acid chain; its full sequence is Putative glutamate--cysteine ligase 2 (385 aa).

It belongs to the glutamate--cysteine ligase type 2 family. YbdK subfamily.

The enzyme catalyses L-cysteine + L-glutamate + ATP = gamma-L-glutamyl-L-cysteine + ADP + phosphate + H(+). Its function is as follows. ATP-dependent carboxylate-amine ligase which exhibits weak glutamate--cysteine ligase activity. The chain is Putative glutamate--cysteine ligase 2 from Herpetosiphon aurantiacus (strain ATCC 23779 / DSM 785 / 114-95).